Reading from the N-terminus, the 305-residue chain is Mas-related G-protein coupled receptor member A2B (305 aa).

The Extracellular portion of the chain corresponds to 1-17 (MDETLPGSINIRILIPK). A helical transmembrane segment spans residues 18-38 (LMIIIFGLVGLMGNAIVFWLL). The Cytoplasmic portion of the chain corresponds to 39–53 (GFHLRRNAFSVYILN). Residues 54–74 (LALADFLFLLSSIIASTLFLL) traverse the membrane as a helical segment. The Extracellular segment spans residues 75-78 (KVSY). A helical transmembrane segment spans residues 79–99 (LSIIFHLCFNTIMMVVYITGI). Topologically, residues 100–132 (SMLSAISTECCLSVLCPTWYRCHRPVHTSTVMC) are cytoplasmic. Residues 133-153 (AVIWVLSLLICILNSYFCAVL) traverse the membrane as a helical segment. The Extracellular portion of the chain corresponds to 154 to 167 (HTRYDNDNECLATN). The chain crosses the membrane as a helical span at residues 168–188 (IFTASYMIFLLVVLCLSSLAL). Over 189 to 207 (LARLFCGAGQMKLTRFHVT) the chain is Cytoplasmic. A helical transmembrane segment spans residues 208-228 (ILLTLLVFLLCGLPFVIYCIL). The Extracellular segment spans residues 229-244 (LFKIKDDFHVLDVNFY). A helical membrane pass occupies residues 245-265 (LALEVLTAINSCANPIIYFFV). Topologically, residues 266 to 305 (GSFRHQLKHQTLKMVLQSALQDTPETAENMVEMSSNKAEP) are cytoplasmic.

This sequence belongs to the G-protein coupled receptor 1 family. Mas subfamily. Expressed in a subset of sensory neurons that includes nociceptors. Expressed in the subclass of non-peptidergic sensory neurons that are IB4(+) and VR1(-).

It localises to the cell membrane. In terms of biological role, orphan receptor. May be a receptor for RFamide-family neuropeptides such as NPFF and NPAF, which are analgesic in vivo. May regulate nociceptor function and/or development, including the sensation or modulation of pain. In Mus musculus (Mouse), this protein is Mas-related G-protein coupled receptor member A2B.